Reading from the N-terminus, the 189-residue chain is Isopentenyl-diphosphate Delta-isomerase (189 aa).

2 residues coordinate Mn(2+): histidine 27 and histidine 34. The Nudix hydrolase domain occupies 32 to 171 (PLHFAFSTYI…PFVFSPWLVD (140 aa)). Residue cysteine 69 is part of the active site. Cysteine 69 contributes to the Mg(2+) binding site. Mn(2+) is bound at residue histidine 71. Residue glutamate 89 coordinates Mg(2+). The Mn(2+) site is built by glutamate 119 and glutamate 121. Glutamate 121 is an active-site residue.

Belongs to the IPP isomerase type 1 family. It depends on Mg(2+) as a cofactor. Requires Mn(2+) as cofactor.

The protein resides in the cytoplasm. It carries out the reaction isopentenyl diphosphate = dimethylallyl diphosphate. The protein operates within isoprenoid biosynthesis; dimethylallyl diphosphate biosynthesis; dimethylallyl diphosphate from isopentenyl diphosphate: step 1/1. Its function is as follows. Catalyzes the 1,3-allylic rearrangement of the homoallylic substrate isopentenyl (IPP) to its highly electrophilic allylic isomer, dimethylallyl diphosphate (DMAPP). The chain is Isopentenyl-diphosphate Delta-isomerase from Corynebacterium glutamicum (strain ATCC 13032 / DSM 20300 / JCM 1318 / BCRC 11384 / CCUG 27702 / LMG 3730 / NBRC 12168 / NCIMB 10025 / NRRL B-2784 / 534).